A 312-amino-acid chain; its full sequence is MEITFLGTSSGVPTRSRNVSSVALRLPQRAEVWLFDCGEGTQHQLLRSDVKISQITRIFVTHMHGDHIYGLTGLLASCGLAGSGQPIEIYGPPELKDYLKACAKYSHFKLPHHIRFHPIHPGILYEDAEFSVSCNLLKHRIPAYGYRIAESDRPGRFNVEKAKSLGIPPGPVYGELKQGKTVTLPDGRNIRGQDLCGERETGRKVIYCTDTVFCEGAIALSEDADVLIHEATFAHQDAQLAFDRLHSTSTMAAQVALAAQVKQLIMTHFSPRYAPGNALQLDDLLQEARAIFPNTILARDFMTYEVPRRSSD.

Zn(2+)-binding residues include His62, His64, Asp66, His67, His139, Asp210, and His268. Asp66 serves as the catalytic Proton acceptor.

It belongs to the RNase Z family. Homodimer. It depends on Zn(2+) as a cofactor.

It catalyses the reaction Endonucleolytic cleavage of RNA, removing extra 3' nucleotides from tRNA precursor, generating 3' termini of tRNAs. A 3'-hydroxy group is left at the tRNA terminus and a 5'-phosphoryl group is left at the trailer molecule.. Functionally, zinc phosphodiesterase, which displays some tRNA 3'-processing endonuclease activity. Probably involved in tRNA maturation, by removing a 3'-trailer from precursor tRNA. The polypeptide is Ribonuclease Z (Crocosphaera subtropica (strain ATCC 51142 / BH68) (Cyanothece sp. (strain ATCC 51142))).